Here is a 211-residue protein sequence, read N- to C-terminus: MTIGVVGRKAGMTRIFTEEGVSIPVTVIEIEPNRVTQFKTEETDGYRAVQVTVGERRASRVTAAQAGHFAKANVAAGRTVMEFRLEEGEYQAGDLINAEIFAAGQLVDVTGQSKGKGFQGTIKRWNFRGQDNTHGNSVSHRVPGSIGQCQTPGRVFKGKKMSGHMGAERVTVQSLEVVRVDAERNLLLVKGAVPGATGGNLVVRPAAKARG.

An N5-methylglutamine modification is found at glutamine 150.

Belongs to the universal ribosomal protein uL3 family. Part of the 50S ribosomal subunit. Forms a cluster with proteins L14 and L19. Methylated by PrmB.

In terms of biological role, one of the primary rRNA binding proteins, it binds directly near the 3'-end of the 23S rRNA, where it nucleates assembly of the 50S subunit. This is Large ribosomal subunit protein uL3 from Pseudomonas fluorescens (strain Pf0-1).